The sequence spans 38 residues: Photosystem II reaction center protein L (38 aa).

The chain crosses the membrane as a helical span at residues 17 to 37 (SLYWGLLLIXVLAVLFSNYFF).

Belongs to the PsbL family. PSII is composed of 1 copy each of membrane proteins PsbA, PsbB, PsbC, PsbD, PsbE, PsbF, PsbH, PsbI, PsbJ, PsbK, PsbL, PsbM, PsbT, PsbX, PsbY, PsbZ, Psb30/Ycf12, at least 3 peripheral proteins of the oxygen-evolving complex and a large number of cofactors. It forms dimeric complexes.

The protein resides in the plastid. It localises to the chloroplast thylakoid membrane. One of the components of the core complex of photosystem II (PSII). PSII is a light-driven water:plastoquinone oxidoreductase that uses light energy to abstract electrons from H(2)O, generating O(2) and a proton gradient subsequently used for ATP formation. It consists of a core antenna complex that captures photons, and an electron transfer chain that converts photonic excitation into a charge separation. This subunit is found at the monomer-monomer interface and is required for correct PSII assembly and/or dimerization. This Allium textile (Textile onion) protein is Photosystem II reaction center protein L.